Consider the following 402-residue polypeptide: p-cumate 2,3-dioxygenase system, ferredoxin--NAD(+) reductase component (402 aa).

The FAD site is built by Ala-16, Lys-51, Val-83, Arg-131, and Asp-275.

This sequence belongs to the FAD-dependent oxidoreductase family. As to quaternary structure, the p-cumate 2,3-dioxygenase multicomponent enzyme system is composed of an electron transfer component and a dioxygenase component (iron sulfur protein (ISP)). The electron transfer component is composed of a ferredoxin reductase (CmtAa) and a ferredoxin (CmtAd), and the dioxygenase component is formed of a large alpha subunit (CmtAb) and a small beta subunit (CmtAc). Requires FAD as cofactor.

The enzyme catalyses 2 reduced [2Fe-2S]-[ferredoxin] + NAD(+) + H(+) = 2 oxidized [2Fe-2S]-[ferredoxin] + NADH. Its pathway is aromatic compound metabolism; p-cumate degradation; acetaldehyde and pyruvate from p-cumate. Its function is as follows. Component of the p-cumate 2,3-dioxygenase multicomponent enzyme system which catalyzes the incorporation of both atoms of molecular oxygen into p-cumate to form cis-2,3-dihydroxy-2,3-dihydro-p-cumate. Ferredoxin reductase catalyzes the transfer of electrons from NADH to ferredoxin (CmtAd). This Pseudomonas putida (Arthrobacter siderocapsulatus) protein is p-cumate 2,3-dioxygenase system, ferredoxin--NAD(+) reductase component.